Consider the following 472-residue polypeptide: Ribulose bisphosphate carboxylase/oxygenase activase, chloroplastic (472 aa).

The N-terminal 58 residues, 1 to 58 (MATAVSTVGAATRAPLNLNGSSAGASVPTSGFLGSSLKKHTNVRFPSSSRTTSMTVKA), are a transit peptide targeting the chloroplast. 163–170 (GGKGQGKS) contacts ATP. The segment at 448–472 (GCTDPEAKNYDPTARSDDGSCTYNL) is disordered. Residues 452 to 465 (PEAKNYDPTARSDD) are compositionally biased toward basic and acidic residues.

This sequence belongs to the RuBisCO activase family.

It localises to the plastid. The protein localises to the chloroplast stroma. Its function is as follows. Activation of RuBisCO (ribulose-1,5-bisphosphate carboxylase/oxygenase; EC 4.1.1.39) involves the ATP-dependent carboxylation of the epsilon-amino group of lysine leading to a carbamate structure. In Spinacia oleracea (Spinach), this protein is Ribulose bisphosphate carboxylase/oxygenase activase, chloroplastic.